The following is a 325-amino-acid chain: Brain mitochondrial carrier protein 1 (325 aa).

6 consecutive transmembrane segments (helical) span residues 38–54 (GLNWKPFVYGGLASIVA), 112–128 (LRQASYGTIKIGIYQSL), 145–165 (MICGVVSGVISSTIANPTDVL), 199–215 (GVVPTAQRAAIVVGVEL), 240–256 (VSSFTCGLAGALASNPV), and 298–315 (GFWPNWLRLGPWNIIFFI). 3 Solcar repeats span residues 42-131 (KPFV…LKRL), 139-224 (ETLL…TKKH), and 233-323 (DTIL…LKRL).

This sequence belongs to the mitochondrial carrier (TC 2.A.29) family. As to quaternary structure, homotetramer. Mainly expressed in brain, particularly abundant in cortex, hippocampus thalamus, amygdala and hypothalamus. Highly expressed in heart and kidney, but not liver or lung (at protein level). In the nervous system, expressed in cortex, basal ganglia, substantia nigra, cerebellum, and spinal cord (at protein level).

Its subcellular location is the mitochondrion inner membrane. The catalysed reaction is sulfite(in) + sulfate(out) = sulfite(out) + sulfate(in). The enzyme catalyses thiosulfate(in) + sulfate(out) = thiosulfate(out) + sulfate(in). It catalyses the reaction sulfate(out) + phosphate(in) = sulfate(in) + phosphate(out). It carries out the reaction oxalate(in) + sulfate(out) = oxalate(out) + sulfate(in). The catalysed reaction is malonate(in) + sulfate(out) = malonate(out) + sulfate(in). The enzyme catalyses maleate(in) + sulfate(out) = maleate(out) + sulfate(in). It catalyses the reaction (S)-malate(in) + sulfate(out) = (S)-malate(out) + sulfate(in). It carries out the reaction (3S)-citramalate(in) + sulfate(out) = (3S)-citramalate(out) + sulfate(in). The catalysed reaction is (3R)-citramalate(in) + sulfate(out) = (3R)-citramalate(out) + sulfate(in). The enzyme catalyses sulfate(out) + succinate(in) = sulfate(in) + succinate(out). It catalyses the reaction (S,S)-tartrate(in) + sulfate(out) = (S,S)-tartrate(out) + sulfate(in). It carries out the reaction (2R,3R)-tartrate(in) + sulfate(out) = (2R,3R)-tartrate(out) + sulfate(in). The catalysed reaction is D-aspartate(in) + sulfate(out) = D-aspartate(out) + sulfate(in). The enzyme catalyses L-aspartate(in) + sulfate(out) = L-aspartate(out) + sulfate(in). It catalyses the reaction sulfate(in) = sulfate(out). It carries out the reaction phosphate(in) = phosphate(out). The catalysed reaction is (S)-malate(out) = (S)-malate(in). The enzyme catalyses citrate(in) = citrate(out). It catalyses the reaction L-aspartate(out) = L-aspartate(in). It carries out the reaction L-glutamate(out) = L-glutamate(in). The catalysed reaction is H(+)(in) = H(+)(out). The enzyme catalyses chloride(in) = chloride(out). Its function is as follows. Transports inorganic anions (sulfate, sulfite, thiosulfate and phosphate) and, to a lesser extent, a variety of dicarboxylates (e.g. malonate, malate and citramalate) and, even more so, aspartate and glutamate and tricarboxylates. May catalyze the export of sulfite and thiosulfate (the hydrogen sulfide degradation products) from the mitochondria, thereby modulating the level of the hydrogen sulfide. Also can mediate a very low unidirectional transport of anions including sulfate, phosphate, (S)-malate, citrate, L-aspartate and L-glutamate. Maintains oxidative balance (through uncoupling activities) and ATP production (by modifying mitochondrial membrane potential). Is able to transport protons across lipid membranes. Also exhibits transmembrane chloride transport activity to a lesser extent. May modify mitochondrial respiratory efficiency and mitochondrial oxidant production. This chain is Brain mitochondrial carrier protein 1, found in Mus musculus (Mouse).